Consider the following 429-residue polypeptide: MTAITNIAAREILDSRGNPTVEVDVLLEDGSFGRAAVPSGASTGAHEAVELRDGDKSRYNGKGVLKAVDAVQSEILDAIGGMDAEDQVAVDEAMIALDGTPNKARLGANAILGVSLAVAKAAAETAGLPLYRYVGGVQGRVLPVPMMNIVNGGAHADNPIDFQEFMVMPVGATSLSDAVRMGAEIFHTLKSALKKAGHNTNVGDEGGFAPNLPSAEAALDFVMESINAAGFKPGSDVVLALDCAATEFFKDGAYRYEGEGQTRSIEQQVDYLAKLTEAYPILSIEDGMSEDDWEGWKLLTDRIGSRVQLVGDDLFVTNVERLARGIETGTANSILVKVNQIGSLTETLAAVDMAQRAGYTAVMSHRSGETEDSTIADLAVATNCGQIKTGSLARSDRLAKYNQLIRIEEGLGAQALYAGRSAIRQLAGR.

A (2R)-2-phosphoglycerate-binding site is contributed by Q163. E205 (proton donor) is an active-site residue. Mg(2+)-binding residues include D242, E285, and D312. (2R)-2-phosphoglycerate is bound by residues K337, R366, S367, and K388. The Proton acceptor role is filled by K337.

The protein belongs to the enolase family. It depends on Mg(2+) as a cofactor.

It is found in the cytoplasm. The protein resides in the secreted. It localises to the cell surface. It carries out the reaction (2R)-2-phosphoglycerate = phosphoenolpyruvate + H2O. It participates in carbohydrate degradation; glycolysis; pyruvate from D-glyceraldehyde 3-phosphate: step 4/5. In terms of biological role, catalyzes the reversible conversion of 2-phosphoglycerate (2-PG) into phosphoenolpyruvate (PEP). It is essential for the degradation of carbohydrates via glycolysis. In Methylorubrum extorquens (strain PA1) (Methylobacterium extorquens), this protein is Enolase.